The chain runs to 451 residues: uncharacterized protein (451 aa).

Mn(2+) is bound by residues Asp-305, Asp-316, His-384, Glu-414, and Glu-428.

It belongs to the peptidase M24B family. Mn(2+) serves as cofactor.

This is an uncharacterized protein from Schizosaccharomyces pombe (strain 972 / ATCC 24843) (Fission yeast).